The sequence spans 295 residues: MVRRLTSPRLEFEAAAIYEYPEHLRSFLNDLPTRPGVYLFHGESDTMPLYIGKSVNIRSRVLSHLRTPDEAAMLRQSRRISWICTAGEIGALLLEARLIKEQQPLFNKRLRRNRQLCALQLNEKRVDVVYAKEVDFSRAPNLFGLFANRRAALQALQSIADEQKLCYGLLGLEPLSRGRACFRSALKRCAGACCGKESHEEHALRLRQSLERLRVVCWPWQGAVALKEQHPEMTQYHIIQNWLWLGAVNSLEEATTLIRTPAGFDHDGYKILCKPLLSGNYEITELDPANDQRAS.

The GIY-YIG domain maps to 33-108 (TRPGVYLFHG…IKEQQPLFNK (76 aa)).

In terms of biological role, incises the DNA at the 3' side of a lesion during nucleotide excision repair. Incises the DNA farther away from the lesion than UvrC. Not able to incise the 5' site of a lesion. When a lesion remains because UvrC is not able to induce the 3' incision, Cho incises the DNA. Then UvrC makes the 5' incision. The combined action of Cho and UvrC broadens the substrate range of nucleotide excision repair. The protein is Excinuclease cho (cho) of Escherichia coli O157:H7.